Consider the following 188-residue polypeptide: Ion-translocating oxidoreductase complex subunit B (188 aa).

Positions 1–23 (MIEAAVSMSALGLGLGLLLGVAA) are hydrophobic. The 4Fe-4S domain maps to 29-88 (ESPPILDAIEGILPGTNCGACGYPGCRGLAEAMSEGAAPVTACAPGGRDVALALAAIVET). [4Fe-4S] cluster is bound by residues Cys46, Cys49, Cys54, Cys71, Cys113, Cys116, Cys119, Cys123, Cys143, Cys146, Cys149, and Cys153. 4Fe-4S ferredoxin-type domains lie at 104–133 (TVAFIFEDHCTGCMRCFKRCPTDAIIGANR) and 134–163 (QIHTVVTDACIGCNACIEACPTEAIVARVK).

The protein belongs to the 4Fe4S bacterial-type ferredoxin family. RnfB subfamily. The complex is composed of six subunits: RnfA, RnfB, RnfC, RnfD, RnfE and RnfG. [4Fe-4S] cluster serves as cofactor.

The protein localises to the cellular chromatophore membrane. In terms of biological role, part of a membrane-bound complex that couples electron transfer with translocation of ions across the membrane. This is Ion-translocating oxidoreductase complex subunit B from Cereibacter sphaeroides (strain ATCC 17029 / ATH 2.4.9) (Rhodobacter sphaeroides).